The following is a 261-amino-acid chain: 5'-nucleotidase SurE (261 aa).

A divalent metal cation-binding residues include Asp-8, Asp-9, Ser-43, and Asn-96.

Belongs to the SurE nucleotidase family. Requires a divalent metal cation as cofactor.

The protein localises to the cytoplasm. The enzyme catalyses a ribonucleoside 5'-phosphate + H2O = a ribonucleoside + phosphate. In terms of biological role, nucleotidase that shows phosphatase activity on nucleoside 5'-monophosphates. This Cereibacter sphaeroides (strain KD131 / KCTC 12085) (Rhodobacter sphaeroides) protein is 5'-nucleotidase SurE.